Reading from the N-terminus, the 240-residue chain is ATP synthase subunit a (240 aa).

The next 5 helical transmembrane spans lie at 21-41 (LSNLMMTFIVCLIVFVFCVWG), 78-98 (IFLPLGLTLIFYILVSNLIGV), 116-136 (DAVMTLTLSTMIIALTHYYGI), 183-203 (ILLSLLVGLATTSIFGFFGAA), and 212-232 (FSVFIGAIQSYVFVMLTMVYM).

The protein belongs to the ATPase A chain family. In terms of assembly, F-type ATPases have 2 components, CF(1) - the catalytic core - and CF(0) - the membrane proton channel. CF(1) has five subunits: alpha(3), beta(3), gamma(1), delta(1), epsilon(1). CF(0) has three main subunits: a(1), b(2) and c(9-12). The alpha and beta chains form an alternating ring which encloses part of the gamma chain. CF(1) is attached to CF(0) by a central stalk formed by the gamma and epsilon chains, while a peripheral stalk is formed by the delta and b chains.

The protein localises to the cell membrane. Key component of the proton channel; it plays a direct role in the translocation of protons across the membrane. The protein is ATP synthase subunit a of Oceanobacillus iheyensis (strain DSM 14371 / CIP 107618 / JCM 11309 / KCTC 3954 / HTE831).